Here is a 321-residue protein sequence, read N- to C-terminus: Lipoyl synthase (321 aa).

[4Fe-4S] cluster-binding residues include Cys-68, Cys-73, Cys-79, Cys-94, Cys-98, Cys-101, and Ser-308. In terms of domain architecture, Radical SAM core spans 80–297 (FNHGTATFMI…KALADELGFT (218 aa)).

Belongs to the radical SAM superfamily. Lipoyl synthase family. It depends on [4Fe-4S] cluster as a cofactor.

It is found in the cytoplasm. The catalysed reaction is [[Fe-S] cluster scaffold protein carrying a second [4Fe-4S](2+) cluster] + N(6)-octanoyl-L-lysyl-[protein] + 2 oxidized [2Fe-2S]-[ferredoxin] + 2 S-adenosyl-L-methionine + 4 H(+) = [[Fe-S] cluster scaffold protein] + N(6)-[(R)-dihydrolipoyl]-L-lysyl-[protein] + 4 Fe(3+) + 2 hydrogen sulfide + 2 5'-deoxyadenosine + 2 L-methionine + 2 reduced [2Fe-2S]-[ferredoxin]. It participates in protein modification; protein lipoylation via endogenous pathway; protein N(6)-(lipoyl)lysine from octanoyl-[acyl-carrier-protein]: step 2/2. Functionally, catalyzes the radical-mediated insertion of two sulfur atoms into the C-6 and C-8 positions of the octanoyl moiety bound to the lipoyl domains of lipoate-dependent enzymes, thereby converting the octanoylated domains into lipoylated derivatives. This is Lipoyl synthase from Shewanella baltica (strain OS223).